The following is a 329-amino-acid chain: Glycerol-3-phosphate dehydrogenase [NAD(P)+] (329 aa).

NADPH is bound by residues tryptophan 11, arginine 31, and lysine 105. Sn-glycerol 3-phosphate-binding residues include lysine 105, glycine 135, and threonine 137. Residue alanine 139 coordinates NADPH. Residues lysine 190, aspartate 243, serine 253, arginine 254, and asparagine 255 each contribute to the sn-glycerol 3-phosphate site. Residue lysine 190 is the Proton acceptor of the active site. Arginine 254 is an NADPH binding site. Positions 277 and 279 each coordinate NADPH.

Belongs to the NAD-dependent glycerol-3-phosphate dehydrogenase family.

It is found in the cytoplasm. It carries out the reaction sn-glycerol 3-phosphate + NAD(+) = dihydroxyacetone phosphate + NADH + H(+). It catalyses the reaction sn-glycerol 3-phosphate + NADP(+) = dihydroxyacetone phosphate + NADPH + H(+). Its pathway is membrane lipid metabolism; glycerophospholipid metabolism. In terms of biological role, catalyzes the reduction of the glycolytic intermediate dihydroxyacetone phosphate (DHAP) to sn-glycerol 3-phosphate (G3P), the key precursor for phospholipid synthesis. In Maridesulfovibrio salexigens (strain ATCC 14822 / DSM 2638 / NCIMB 8403 / VKM B-1763) (Desulfovibrio salexigens), this protein is Glycerol-3-phosphate dehydrogenase [NAD(P)+].